The sequence spans 879 residues: MAKIIDARLRDNVHLLGELLGNTIRAQHGDQFFDKIERIRKGAKAARKGSAEGAQLLAETLDSLDESELLPMTRAFNQFLNLANIAEQYHQVRRRAAGEPAPFEIGVFADLIERLKAAGHDNEFIARQVSRLEIELVLTAHPTEVSRRTLIQKYDAIAQQLAARDHTDLSDAERASIELSLQRLIAEVWHTEEIRRNRPTPVEEAKWGFAAIENSLWKAVPNVLRQTDATLHRLTGLHLPLEAAPIRFASWMGGDRDGNPNVTAMVSREVLLTARWVAADLYLREIEGLITALSMREASDELLRQSGDSAEPYRVLLKPLRQRLRATREWARAAIEHGQPAPAEVLQDCAELRRPLELCYRSLHACGMGVIADGALLDCLRRLAVFGLFLVRLDIRQDAARHAAALAEITDYLGLGDYQQWDEQKRLDWLQHELANRRPLLPAHYHPSADTAEVLATCAVIAEAPAASLGSYVISMAHAASDVLAVQLLLKEAGLQRPMRVVPLFETLDDLNNAAPTIDRLLSLPGYRQRLHGPQEVMIGYSDSAKDAGTTAAAWAQYRAQEQLVEVCREHGVELLLFHGRGGTVGRGGGPAHAAILSQPPGSVAGRFRTTEQGEMIRFKFGLPDIAEQNLNLYLAAVLEATLLPPPPPEPGWRETMDRLAAEGVAAYRGVVREHPLFVDYFRQATPELELGRLPLGSRPAKRREGGVESLRAIPWIFAWTQTRLMLPAWLGWEQALHGALQRGEGERLAEMRARWPFFSTRIDMLEMVLAKADADIARRYDERLVQPELLSLGSDLRDRLSQVIEAVLSLTGQSDLLDHSPKTQEAFSLRNTYLDPLHLMQIELLARSRQRQGPAESPLEQALLVSVAGIAAGLRNTG.

Residues His-141 and Lys-546 contribute to the active site.

The protein belongs to the PEPCase type 1 family. The cofactor is Mg(2+).

It catalyses the reaction oxaloacetate + phosphate = phosphoenolpyruvate + hydrogencarbonate. In terms of biological role, forms oxaloacetate, a four-carbon dicarboxylic acid source for the tricarboxylic acid cycle. The chain is Phosphoenolpyruvate carboxylase from Stutzerimonas stutzeri (strain A1501) (Pseudomonas stutzeri).